A 142-amino-acid chain; its full sequence is Large ribosomal subunit protein uL13 (142 aa).

Belongs to the universal ribosomal protein uL13 family. Part of the 50S ribosomal subunit.

Functionally, this protein is one of the early assembly proteins of the 50S ribosomal subunit, although it is not seen to bind rRNA by itself. It is important during the early stages of 50S assembly. In Photorhabdus laumondii subsp. laumondii (strain DSM 15139 / CIP 105565 / TT01) (Photorhabdus luminescens subsp. laumondii), this protein is Large ribosomal subunit protein uL13.